The chain runs to 125 residues: Fumarate reductase subunit D (125 aa).

A run of 3 helical transmembrane segments spans residues 29–49, 64–84, and 102–122; these read VTALVAPVLLLLFGLAFPLGW, NPITKLVVLVLVVLALFHAAH, and VIALWCYGMAVLGSATAGWML.

This sequence belongs to the FrdD family. In terms of assembly, part of an enzyme complex containing four subunits: a flavoprotein (FrdA), an iron-sulfur protein (FrdB), and two hydrophobic anchor proteins (FrdC and FrdD).

The protein localises to the cell membrane. Functionally, anchors the catalytic components of the fumarate reductase complex to the cell membrane, binds quinones. This is Fumarate reductase subunit D from Mycobacterium bovis (strain BCG / Tokyo 172 / ATCC 35737 / TMC 1019).